The chain runs to 854 residues: Lysine-specific demethylase 3 (854 aa).

A disordered region spans residues 64 to 88; that stretch reads QRVQQEEESLGQVPPLTEEEQQRHD. Residues 601–806 form the JmjC domain; the sequence is LRTGNLNIAS…HCYHLTHEFR (206 aa). His-643, Asp-645, and His-774 together coordinate Fe cation.

The protein belongs to the JHDM2-like histone demethylase family. Fe(2+) is required as a cofactor. In terms of tissue distribution, expressed in neurons close to the dorsal lateral neurons involved in circadian rhythm.

Its subcellular location is the nucleus. The protein localises to the cytoplasm. It carries out the reaction N(6),N(6)-dimethyl-L-lysyl(9)-[histone H3] + 2 2-oxoglutarate + 2 O2 = L-lysyl(9)-[histone H3] + 2 formaldehyde + 2 succinate + 2 CO2. Its function is as follows. Histone demethylase that specifically demethylates 'Lys-10' of histone H3 (H3K9), thereby playing a central role in histone code. Demethylation of Lys residue generates formaldehyde and succinate. Probably involved in regulation of chromatin structure, promoting expansion of euchromatin. Negatively regulates rhino-dependent piRNA production capacity of several genomic regions; may help define the frontiers of piRNA clusters by regulating histone methylation levels. May be involved in regulation of behavior and circadian rhythms. In Drosophila melanogaster (Fruit fly), this protein is Lysine-specific demethylase 3.